The sequence spans 697 residues: Potassium-transporting ATPase ATP-binding subunit (697 aa).

Transmembrane regions (helical) follow at residues 36 to 56 (VMFV…RDLI), 66 to 86 (LQII…EAVA), 218 to 238 (IALN…TATI), and 253 to 273 (VLVA…LSAI). Asp306 acts as the 4-aspartylphosphate intermediate in catalysis. ATP is bound by residues Asp343, Glu347, 376 to 383 (FTAQTRMS), and Lys394. Mg(2+) is bound by residues Asp526 and Asp530. Transmembrane regions (helical) follow at residues 595–615 (YFAI…QSTG), 631–651 (AILS…PLSL), and 669–689 (LLVY…IIDM).

Belongs to the cation transport ATPase (P-type) (TC 3.A.3) family. Type IA subfamily. In terms of assembly, the system is composed of three essential subunits: KdpA, KdpB and KdpC.

The protein localises to the cell inner membrane. It carries out the reaction K(+)(out) + ATP + H2O = K(+)(in) + ADP + phosphate + H(+). Its function is as follows. Part of the high-affinity ATP-driven potassium transport (or Kdp) system, which catalyzes the hydrolysis of ATP coupled with the electrogenic transport of potassium into the cytoplasm. This subunit is responsible for energy coupling to the transport system and for the release of the potassium ions to the cytoplasm. The protein is Potassium-transporting ATPase ATP-binding subunit of Mesorhizobium japonicum (strain LMG 29417 / CECT 9101 / MAFF 303099) (Mesorhizobium loti (strain MAFF 303099)).